A 146-amino-acid chain; its full sequence is Putative pre-16S rRNA nuclease (146 aa).

The protein belongs to the YqgF nuclease family.

It localises to the cytoplasm. Its function is as follows. Could be a nuclease involved in processing of the 5'-end of pre-16S rRNA. This chain is Putative pre-16S rRNA nuclease, found in Paraburkholderia phytofirmans (strain DSM 17436 / LMG 22146 / PsJN) (Burkholderia phytofirmans).